Here is a 172-residue protein sequence, read N- to C-terminus: Disulfide bond formation protein B (172 aa).

At 1 to 11 (MNPFRWSFRAQ) the chain is on the cytoplasmic side. A helical transmembrane segment spans residues 12 to 28 (FLLGFLACAGLLAYAIY). Topologically, residues 29–46 (VQLHLGLEPCPLCIFQRI) are periplasmic. Cys38 and Cys41 form a disulfide bridge. A helical transmembrane segment spans residues 47–63 (AFAALAVFFLIGALHGP). The Cytoplasmic segment spans residues 64 to 70 (RAAGARK). The helical transmembrane segment at 71–88 (VYGVLSFIAAGVGMGIGA) threads the bilayer. Topologically, residues 89-145 (RHVWVQIRPKDMMSSCGPPLSFLSETMGPFEVFRTVLTGTGDCGNIDWRFLGLSMPM) are periplasmic. A disulfide bridge connects residues Cys104 and Cys131. Residues 146 to 164 (WSMVWFVGLALWALSAGFK) traverse the membrane as a helical segment. Residues 165-172 (ARRSSLHH) lie on the Cytoplasmic side of the membrane.

This sequence belongs to the DsbB family.

Its subcellular location is the cell inner membrane. In terms of biological role, required for disulfide bond formation in some periplasmic proteins. Acts by oxidizing the DsbA protein. This is Disulfide bond formation protein B from Xanthomonas oryzae pv. oryzae (strain MAFF 311018).